The chain runs to 71 residues: Large ribosomal subunit protein uL30 (71 aa).

This sequence belongs to the universal ribosomal protein uL30 family. In terms of assembly, part of the 50S ribosomal subunit.

This is Large ribosomal subunit protein uL30 from Mycobacterium leprae (strain TN).